A 311-amino-acid polypeptide reads, in one-letter code: Maspardin (311 aa).

Positions 86 to 159 (EFCDGFRKLL…NSFWLMPSFM (74 aa)) constitute an AB hydrolase-1 domain.

Belongs to the AB hydrolase superfamily.

The protein localises to the cytoplasm. This Danio rerio (Zebrafish) protein is Maspardin (spg21).